We begin with the raw amino-acid sequence, 366 residues long: Phenylalanine--tRNA ligase alpha subunit (366 aa).

Glu259 is a binding site for Mg(2+).

This sequence belongs to the class-II aminoacyl-tRNA synthetase family. Phe-tRNA synthetase alpha subunit type 1 subfamily. As to quaternary structure, tetramer of two alpha and two beta subunits. Requires Mg(2+) as cofactor.

It localises to the cytoplasm. It carries out the reaction tRNA(Phe) + L-phenylalanine + ATP = L-phenylalanyl-tRNA(Phe) + AMP + diphosphate + H(+). In Novosphingobium aromaticivorans (strain ATCC 700278 / DSM 12444 / CCUG 56034 / CIP 105152 / NBRC 16084 / F199), this protein is Phenylalanine--tRNA ligase alpha subunit.